Here is a 479-residue protein sequence, read N- to C-terminus: ATP-dependent RNA helicase DDX19B (479 aa).

Ala2 carries the post-translational modification N-acetylalanine. The interval 2-300 is N-terminal lobe; the sequence is ATDSWALAVD…DPNVIKLKRE (299 aa). The interval 34-54 is disordered; sequence TNGAVVKTNANAEKTDEEEKE. Residues 55-68 form an N-terminal helix region; it reads DRAAQSLLNKLIRS. The Q motif signature appears at 92–120; sequence KSFEELRLKPQLLQGVYAMGFNRPSKIQE. ATP contacts are provided by residues Gln119 and 138 to 145; that span reads SQSGTGKT. Residues 125–295 enclose the Helicase ATP-binding domain; sequence LMLAEPPQNL…QKVVPDPNVI (171 aa). Residues 242–245 carry the DEAD box motif; that stretch reads DEAD. Positions 301–479 are C-terminal lobe; it reads EETLDTIKQY…DLDEIEKIAN (179 aa). The region spanning 306–474 is the Helicase C-terminal domain; the sequence is TIKQYYVLCS…RLDTDDLDEI (169 aa). Residues Arg429 and Arg432 each contribute to the ATP site.

This sequence belongs to the DEAD box helicase family. DDX19/DBP5 subfamily. In terms of assembly, associates with the nuclear pore complex via interaction with NUP214. Interacts with NUP214 or RNA in a mutually exclusive manner.

The protein resides in the cytoplasm. The protein localises to the nucleus. It is found in the nucleoplasm. It carries out the reaction ATP + H2O = ADP + phosphate + H(+). ATP-dependent RNA helicase involved in mRNA export from the nucleus. Rather than unwinding RNA duplexes, DDX19B functions as a remodeler of ribonucleoprotein particles, whereby proteins bound to nuclear mRNA are dissociated and replaced by cytoplasmic mRNA binding proteins. In Homo sapiens (Human), this protein is ATP-dependent RNA helicase DDX19B (DDX19B).